A 510-amino-acid polypeptide reads, in one-letter code: UDP-N-acetylmuramoylalanine--D-glutamate ligase (510 aa).

Position 138–144 (138–144 (GTNGKTT)) interacts with ATP. Residues 294–316 (FDEPAPAPRRKKDAPPPTRAGGR) are disordered.

Belongs to the MurCDEF family.

The protein localises to the cytoplasm. The enzyme catalyses UDP-N-acetyl-alpha-D-muramoyl-L-alanine + D-glutamate + ATP = UDP-N-acetyl-alpha-D-muramoyl-L-alanyl-D-glutamate + ADP + phosphate + H(+). Its pathway is cell wall biogenesis; peptidoglycan biosynthesis. Functionally, cell wall formation. Catalyzes the addition of glutamate to the nucleotide precursor UDP-N-acetylmuramoyl-L-alanine (UMA). The protein is UDP-N-acetylmuramoylalanine--D-glutamate ligase of Bordetella bronchiseptica (strain ATCC BAA-588 / NCTC 13252 / RB50) (Alcaligenes bronchisepticus).